Reading from the N-terminus, the 331-residue chain is Malate dehydrogenase (331 aa).

NAD(+) is bound at residue 14 to 20 (GAAGSIG). Substrate-binding residues include R95 and R101. NAD(+) contacts are provided by residues N108, Q115, and 132–134 (VGN). Substrate is bound by residues N134 and R165. H190 functions as the Proton acceptor in the catalytic mechanism.

This sequence belongs to the LDH/MDH superfamily. MDH type 2 family.

It catalyses the reaction (S)-malate + NAD(+) = oxaloacetate + NADH + H(+). Its function is as follows. Catalyzes the reversible oxidation of malate to oxaloacetate. In Rhodococcus jostii (strain RHA1), this protein is Malate dehydrogenase.